Reading from the N-terminus, the 226-residue chain is UPF0758 protein SPJ_1027 (226 aa).

Positions 103–225 constitute an MPN domain; that stretch reads SILSSQKLAK…YFSYREKTDL (123 aa). 3 residues coordinate Zn(2+): His-174, His-176, and Asp-187. The JAMM motif motif lies at 174–187; that stretch reads HNHPSGAVAPSQND.

Belongs to the UPF0758 family.

In Streptococcus pneumoniae (strain JJA), this protein is UPF0758 protein SPJ_1027.